The following is a 62-amino-acid chain: Large ribosomal subunit protein bL28 (62 aa).

Residues 1–26 are disordered; that stretch reads MARKCYVTGKSPKSGNNRSHALNKTK. Residues 11-20 show a composition bias toward polar residues; that stretch reads SPKSGNNRSH.

The protein belongs to the bacterial ribosomal protein bL28 family.

The protein is Large ribosomal subunit protein bL28 of Exiguobacterium sibiricum (strain DSM 17290 / CCUG 55495 / CIP 109462 / JCM 13490 / 255-15).